The sequence spans 247 residues: NADH-ubiquinone oxidoreductase chain 6 (247 aa).

5 consecutive transmembrane segments (helical) span residues Thr-18–Ala-38, Ser-44–Leu-64, Ile-70–Phe-90, Tyr-104–Asp-124, and Val-168–Thr-188.

The protein belongs to the complex I subunit 6 family.

The protein localises to the mitochondrion membrane. It catalyses the reaction a ubiquinone + NADH + 5 H(+)(in) = a ubiquinol + NAD(+) + 4 H(+)(out). Its function is as follows. Core subunit of the mitochondrial membrane respiratory chain NADH dehydrogenase (Complex I) that is believed to belong to the minimal assembly required for catalysis. Complex I functions in the transfer of electrons from NADH to the respiratory chain. The immediate electron acceptor for the enzyme is believed to be ubiquinone. The sequence is that of NADH-ubiquinone oxidoreductase chain 6 (ND6) from Triticum aestivum (Wheat).